The sequence spans 444 residues: L-ornithine N(5)-monooxygenase (444 aa).

Residues 40–48 (ERQPAFGWH) and Gln59 each bind FAD. Residue Lys64 participates in substrate binding. Position 125 (Val125) interacts with FAD. NADP(+)-binding positions include 211–214 (AGQS) and Arg236. Residues 250–253 (NEIF) and Asn280 contribute to the substrate site. Residue 280–282 (NYA) participates in NADP(+) binding. Residue 408-410 (RCC) participates in FAD binding. Residues 420-432 (SARRSKTGSRPRT) show a composition bias toward basic residues. The interval 420–444 (SARRSKTGSRPRTMKAWPGPRTKND) is disordered.

This sequence belongs to the lysine N(6)-hydroxylase/L-ornithine N(5)-oxygenase family. FAD is required as a cofactor.

The enzyme catalyses L-ornithine + NADPH + O2 = N(5)-hydroxy-L-ornithine + NADP(+) + H2O. It functions in the pathway siderophore biosynthesis; ornibactin biosynthesis. Catalyzes the conversion of L-ornithine to N(5)-hydroxyornithine, the first step in the biosynthesis of all hydroxamate-containing siderophores, such as ornibactin. The protein is L-ornithine N(5)-monooxygenase of Burkholderia cepacia (Pseudomonas cepacia).